A 93-amino-acid chain; its full sequence is YcgL domain-containing protein VV1_0131 (93 aa).

Positions methionine 1–lysine 84 constitute a YcgL domain. Residues leucine 72 to aspartate 93 are disordered.

This Vibrio vulnificus (strain CMCP6) protein is YcgL domain-containing protein VV1_0131.